The primary structure comprises 424 residues: Glutamate-1-semialdehyde 2,1-aminomutase (424 aa).

Lys266 is modified (N6-(pyridoxal phosphate)lysine).

This sequence belongs to the class-III pyridoxal-phosphate-dependent aminotransferase family. HemL subfamily. In terms of assembly, homodimer. Pyridoxal 5'-phosphate is required as a cofactor.

The protein resides in the cytoplasm. The catalysed reaction is (S)-4-amino-5-oxopentanoate = 5-aminolevulinate. It participates in porphyrin-containing compound metabolism; protoporphyrin-IX biosynthesis; 5-aminolevulinate from L-glutamyl-tRNA(Glu): step 2/2. The chain is Glutamate-1-semialdehyde 2,1-aminomutase from Thermus thermophilus (strain ATCC 27634 / DSM 579 / HB8).